Consider the following 768-residue polypeptide: Vitamin B12-dependent ribonucleoside-diphosphate reductase (768 aa).

Residues 3–97 (KEVVKRDGTV…LYREKRRAIR (95 aa)) enclose the ATP-cone domain. Substrate is bound by residues Ser-234, 249–250 (AC), Gly-278, 432–436 (NPCGE), and 579–583 (PTGTI). A disulfide bridge links Cys-250 with Cys-445. Asn-432 (proton acceptor) is an active-site residue. Cys-434 (cysteine radical intermediate) is an active-site residue. Glu-436 functions as the Proton acceptor in the catalytic mechanism.

It belongs to the ribonucleoside diphosphate reductase class-2 family. As to quaternary structure, monomer. The cofactor is adenosylcob(III)alamin.

The enzyme catalyses a 2'-deoxyribonucleoside 5'-diphosphate + [thioredoxin]-disulfide + H2O = a ribonucleoside 5'-diphosphate + [thioredoxin]-dithiol. Functionally, provides the precursors necessary for DNA synthesis. Catalyzes the biosynthesis of deoxyribonucleotides from the corresponding ribonucleotides. This chain is Vitamin B12-dependent ribonucleoside-diphosphate reductase, found in Thermoplasma acidophilum (strain ATCC 25905 / DSM 1728 / JCM 9062 / NBRC 15155 / AMRC-C165).